A 238-amino-acid polypeptide reads, in one-letter code: Endonuclease V (238 aa).

2 residues coordinate Mg(2+): D46 and D116.

This sequence belongs to the endonuclease V family. The cofactor is Mg(2+).

The protein localises to the cytoplasm. The catalysed reaction is Endonucleolytic cleavage at apurinic or apyrimidinic sites to products with a 5'-phosphate.. Its function is as follows. DNA repair enzyme involved in the repair of deaminated bases. Selectively cleaves double-stranded DNA at the second phosphodiester bond 3' to a deoxyinosine leaving behind the intact lesion on the nicked DNA. The sequence is that of Endonuclease V from Bacillus velezensis (strain DSM 23117 / BGSC 10A6 / LMG 26770 / FZB42) (Bacillus amyloliquefaciens subsp. plantarum).